The following is a 165-amino-acid chain: Cyclic pyranopterin monophosphate synthase (165 aa).

Residues 76-78 (MCH) and 113-114 (IE) each bind substrate. The active site involves D128.

Belongs to the MoaC family. Homohexamer; trimer of dimers.

It carries out the reaction (8S)-3',8-cyclo-7,8-dihydroguanosine 5'-triphosphate = cyclic pyranopterin phosphate + diphosphate. It functions in the pathway cofactor biosynthesis; molybdopterin biosynthesis. Its function is as follows. Catalyzes the conversion of (8S)-3',8-cyclo-7,8-dihydroguanosine 5'-triphosphate to cyclic pyranopterin monophosphate (cPMP). This Limosilactobacillus fermentum (strain NBRC 3956 / LMG 18251) (Lactobacillus fermentum) protein is Cyclic pyranopterin monophosphate synthase.